A 432-amino-acid polypeptide reads, in one-letter code: EF-hand calcium-binding domain-containing protein 3 (432 aa).

EF-hand domains are found at residues alanine 45 to asparagine 80 and leucine 81 to phenylalanine 116. Aspartate 94, aspartate 96, aspartate 98, lysine 100, and aspartate 105 together coordinate Ca(2+). Tyrosine 273 carries the phosphotyrosine modification. The segment at asparagine 394–glutamine 432 is disordered. Low complexity predominate over residues serine 399–leucine 411. Positions arginine 420–glutamine 432 are enriched in basic residues.

The protein is EF-hand calcium-binding domain-containing protein 3 (Efcab3) of Rattus norvegicus (Rat).